The primary structure comprises 562 residues: Potassium-transporting ATPase potassium-binding subunit (562 aa).

12 helical membrane passes run 6–26, 62–82, 132–152, 175–195, 253–273, 283–303, 327–347, 356–376, 379–399, 416–436, 483–503, and 526–546; these read FLLI…LGGF, YALA…VLLM, GLTV…FALI, LYVL…QGVL, FVQM…FGQV, LIWA…YAEL, FGIL…CGAV, ALGG…FGGV, GLYG…LMIG, MTAL…ALAL, LLLA…VLAI, and LFIG…FIPA.

The protein belongs to the KdpA family. As to quaternary structure, the system is composed of three essential subunits: KdpA, KdpB and KdpC.

It localises to the cell inner membrane. Part of the high-affinity ATP-driven potassium transport (or Kdp) system, which catalyzes the hydrolysis of ATP coupled with the electrogenic transport of potassium into the cytoplasm. This subunit binds the periplasmic potassium ions and delivers the ions to the membrane domain of KdpB through an intramembrane tunnel. This chain is Potassium-transporting ATPase potassium-binding subunit, found in Yersinia pseudotuberculosis serotype I (strain IP32953).